We begin with the raw amino-acid sequence, 607 residues long: LRR receptor kinase SERK2 (607 aa).

The first 21 residues, 1–21 (MRELRVAVLIIAVSLPSFSAS), serve as a signal peptide directing secretion. Over 22 to 219 (DRQGDALYDM…QSGSHSSKIG (198 aa)) the chain is Extracellular. 2 N-linked (GlcNAc...) asparagine glycosylation sites follow: N36 and N110. LRR repeat units follow at residues 87 to 110 (LKYL…QFGN), 111 to 135 (LSSL…LGQL), 136 to 159 (SKLQ…LAKI), and 160 to 183 (SSLT…LFQV). Residues N149, N171, N187, and N206 are each glycosylated (N-linked (GlcNAc...) asparagine). The helical transmembrane segment at 220–240 (IVLGTVGGVIGLLIVAALFLF) threads the bilayer. Over 241–607 (CKGRRKSHLR…QEAIELSGGR (367 aa)) the chain is Cytoplasmic. The region spanning 284 to 563 (FSERNVLGQG…VVRMLEGEGL (280 aa)) is the Protein kinase domain. ATP-binding positions include 290–298 (LGQGGFGKV) and K312. Catalysis depends on D411, which acts as the Proton acceptor.

This sequence belongs to the protein kinase superfamily. Ser/Thr protein kinase family.

Its subcellular location is the cell membrane. It carries out the reaction L-seryl-[protein] + ATP = O-phospho-L-seryl-[protein] + ADP + H(+). It catalyses the reaction L-threonyl-[protein] + ATP = O-phospho-L-threonyl-[protein] + ADP + H(+). May be involved in the regulation of plant growth through the brassinosteroid (BR) signaling pathway. This is LRR receptor kinase SERK2 from Oryza sativa subsp. japonica (Rice).